The sequence spans 105 residues: Endogenous retrovirus group K member 16 Rec protein (105 aa).

The segment at 1–41 is disordered; it reads MNPSEMQRKAPPRRRRHRNRAPSSHKMNKMMMSEEQMKLPS. Basic residues predominate over residues 10–20; sequence APPRRRRHRNR. A Nuclear localization signal motif is present at residues 13 to 20; it reads RRRRHRNR. The Nuclear export signal motif lies at 50–59; the sequence is WAQLNKLTQL.

Forms homodimers, homotrimers, and homotetramers via a C-terminal domain. Associates with XPO1 and with ZNF145.

The protein resides in the cytoplasm. Its subcellular location is the nucleus. It localises to the nucleolus. Functionally, retroviral replication requires the nuclear export and translation of unspliced, singly-spliced and multiply-spliced derivatives of the initial genomic transcript. Rec interacts with a highly structured RNA element (RcRE) present in the viral 3'LTR and recruits the cellular nuclear export machinery. This permits export to the cytoplasm of unspliced genomic or incompletely spliced subgenomic viral transcripts. The polypeptide is Endogenous retrovirus group K member 16 Rec protein (ERVK-16) (Homo sapiens (Human)).